We begin with the raw amino-acid sequence, 167 residues long: Transcription factor E (167 aa).

One can recognise an HTH TFE/IIEalpha-type domain in the interval 8 to 90; it reads NDKVIRGYLI…LWHLDFSDVE (83 aa).

The protein belongs to the TFE family. In terms of assembly, monomer. Interaction with RNA polymerase subunits RpoF and RpoE is necessary for Tfe stimulatory transcription activity. Able to interact with Tbp and RNA polymerase in the absence of DNA promoter. Interacts both with the preinitiation and elongation complexes.

Functionally, transcription factor that plays a role in the activation of archaeal genes transcribed by RNA polymerase. Facilitates transcription initiation by enhancing TATA-box recognition by TATA-box-binding protein (Tbp), and transcription factor B (Tfb) and RNA polymerase recruitment. Not absolutely required for transcription in vitro, but particularly important in cases where Tbp or Tfb function is not optimal. It dynamically alters the nucleic acid-binding properties of RNA polymerases by stabilizing the initiation complex and destabilizing elongation complexes. Seems to translocate with the RNA polymerase following initiation and acts by binding to the non template strand of the transcription bubble in elongation complexes. This Methanosarcina acetivorans (strain ATCC 35395 / DSM 2834 / JCM 12185 / C2A) protein is Transcription factor E.